A 55-amino-acid chain; its full sequence is Neurotoxin X-29S (55 aa).

The N-terminal stretch at 1-23 (MKIFFAVLVILVLFSMLIWTAYG) is a signal peptide. 3 cysteine pairs are disulfide-bonded: Cys30/Cys45, Cys36/Cys50, and Cys39/Cys53.

As to expression, expressed by the venom gland.

It localises to the secreted. The polypeptide is Neurotoxin X-29S (Olivierus martensii (Manchurian scorpion)).